Reading from the N-terminus, the 86-residue chain is Toxin CngtIV (86 aa).

An N-terminal signal peptide occupies residues 1-19; the sequence is MNSLLIITACLVLIGTVWA. Residues 20 to 84 enclose the LCN-type CS-alpha/beta domain; sequence KDGYLVDVKG…TWPLPNKRCG (65 aa). 4 cysteine pairs are disulfide-bonded: C30/C83, C34/C59, C43/C64, and C47/C66.

Belongs to the long (4 C-C) scorpion toxin superfamily. Sodium channel inhibitor family. Beta subfamily. Expressed by the venom gland.

It localises to the secreted. Functionally, beta toxins bind voltage-independently at site-4 of sodium channels (Nav) and shift the voltage of activation toward more negative potentials thereby affecting sodium channel activation and promoting spontaneous and repetitive firing. This Centruroides noxius (Mexican scorpion) protein is Toxin CngtIV.